We begin with the raw amino-acid sequence, 343 residues long: Anthranilate phosphoribosyltransferase (343 aa).

5-phospho-alpha-D-ribose 1-diphosphate is bound by residues glycine 84, glycine 87 to aspartate 88, threonine 92, asparagine 94 to threonine 97, lysine 112 to serine 120, and serine 124. Glycine 84 contributes to the anthranilate binding site. Position 96 (serine 96) interacts with Mg(2+). Asparagine 115 serves as a coordination point for anthranilate. Arginine 170 is a binding site for anthranilate. The Mg(2+) site is built by aspartate 229 and glutamate 230.

It belongs to the anthranilate phosphoribosyltransferase family. In terms of assembly, homodimer. It depends on Mg(2+) as a cofactor.

It carries out the reaction N-(5-phospho-beta-D-ribosyl)anthranilate + diphosphate = 5-phospho-alpha-D-ribose 1-diphosphate + anthranilate. It functions in the pathway amino-acid biosynthesis; L-tryptophan biosynthesis; L-tryptophan from chorismate: step 2/5. Functionally, catalyzes the transfer of the phosphoribosyl group of 5-phosphorylribose-1-pyrophosphate (PRPP) to anthranilate to yield N-(5'-phosphoribosyl)-anthranilate (PRA). This chain is Anthranilate phosphoribosyltransferase, found in Burkholderia orbicola (strain AU 1054).